Reading from the N-terminus, the 99-residue chain is Aspartyl/glutamyl-tRNA(Asn/Gln) amidotransferase subunit C (99 aa).

It belongs to the GatC family. As to quaternary structure, heterotrimer of A, B and C subunits.

It carries out the reaction L-glutamyl-tRNA(Gln) + L-glutamine + ATP + H2O = L-glutaminyl-tRNA(Gln) + L-glutamate + ADP + phosphate + H(+). The enzyme catalyses L-aspartyl-tRNA(Asn) + L-glutamine + ATP + H2O = L-asparaginyl-tRNA(Asn) + L-glutamate + ADP + phosphate + 2 H(+). In terms of biological role, allows the formation of correctly charged Asn-tRNA(Asn) or Gln-tRNA(Gln) through the transamidation of misacylated Asp-tRNA(Asn) or Glu-tRNA(Gln) in organisms which lack either or both of asparaginyl-tRNA or glutaminyl-tRNA synthetases. The reaction takes place in the presence of glutamine and ATP through an activated phospho-Asp-tRNA(Asn) or phospho-Glu-tRNA(Gln). The polypeptide is Aspartyl/glutamyl-tRNA(Asn/Gln) amidotransferase subunit C (Paraburkholderia phytofirmans (strain DSM 17436 / LMG 22146 / PsJN) (Burkholderia phytofirmans)).